The sequence spans 127 residues: MVISPLALRRLSYGLIALVLLSALILVWTALQRQESTLAIRPVSQGASVPDGFYIWHHLDANGIQFKSITPQDDVLLIKFDSSAQSAAAKVVLDRSLPRGYIIALQDDQSQTAVWLTRLRDTSHRFG.

At 1-10 (MVISPLALRR) the chain is on the cytoplasmic side. Residues 11 to 31 (LSYGLIALVLLSALILVWTAL) form a helical membrane-spanning segment. Residues 32-127 (QRQESTLAIR…RLRDTSHRFG (96 aa)) lie on the Periplasmic side of the membrane.

It belongs to the MzrA family. Interacts with EnvZ.

The protein resides in the cell inner membrane. Functionally, modulates the activity of the EnvZ/OmpR two-component regulatory system, probably by directly modulating EnvZ enzymatic activity and increasing stability of phosphorylated OmpR. This chain is Modulator protein MzrA, found in Enterobacter sp. (strain 638).